Reading from the N-terminus, the 85-residue chain is Large ribosomal subunit protein bL27 (85 aa).

The disordered stretch occupies residues 1-22 (MAHKKGVGSTRNGRDSESKRLG).

Belongs to the bacterial ribosomal protein bL27 family.

This chain is Large ribosomal subunit protein bL27, found in Geobacter metallireducens (strain ATCC 53774 / DSM 7210 / GS-15).